Here is a 159-residue protein sequence, read N- to C-terminus: HSP70 co-chaperone SNL1 (159 aa).

Over 1 to 12 (MSHNAMEHWKSK) the chain is Perinuclear space. A helical; Signal-anchor for type II membrane protein membrane pass occupies residues 13-35 (LSKTSTSTYVLLAVIAVVFLVTI). The Cytoplasmic segment spans residues 36-159 (RRPNGSKGKS…AMLKSLDSLK (124 aa)). Residues 39-64 (NGSKGKSSKKRASKKNKKGKNQFEKA) are disordered. Over residues 44-58 (KSSKKRASKKNKKGK) the composition is skewed to basic residues. In terms of domain architecture, BAG spans 73–159 (QIDNVSLRYG…AMLKSLDSLK (87 aa)).

In terms of assembly, interacts with the HSP70 family members SSA1, SSA4, and SSB1. These interactions are strongly reduced by ADP and ATP.

It localises to the endoplasmic reticulum membrane. It is found in the nucleus membrane. In terms of biological role, stimulator of ATPase activity of molecular chaperones of the HSP70 family (principally of the SSA class). Stimulation is important for HSP70-substrate complex dissociation after folding of newly synthesized or refolded proteins. SNL1 is probably involved in nuclear pore biogenesis and in particular the folding or refolding of misfolded NUP116, GLE2 and NIC96. The polypeptide is HSP70 co-chaperone SNL1 (SNL1) (Saccharomyces cerevisiae (strain ATCC 204508 / S288c) (Baker's yeast)).